The primary structure comprises 199 residues: NADH-quinone oxidoreductase subunit B 2 (199 aa).

[4Fe-4S] cluster contacts are provided by Cys78, Cys79, Cys143, and Cys173.

The protein belongs to the complex I 20 kDa subunit family. NDH-1 is composed of 14 different subunits. Subunits NuoB, C, D, E, F, and G constitute the peripheral sector of the complex. The cofactor is [4Fe-4S] cluster.

Its subcellular location is the cell inner membrane. The enzyme catalyses a quinone + NADH + 5 H(+)(in) = a quinol + NAD(+) + 4 H(+)(out). NDH-1 shuttles electrons from NADH, via FMN and iron-sulfur (Fe-S) centers, to quinones in the respiratory chain. The immediate electron acceptor for the enzyme in this species is believed to be ubiquinone. Couples the redox reaction to proton translocation (for every two electrons transferred, four hydrogen ions are translocated across the cytoplasmic membrane), and thus conserves the redox energy in a proton gradient. This is NADH-quinone oxidoreductase subunit B 2 from Rhodopseudomonas palustris (strain BisB5).